The sequence spans 338 residues: Lipoate-protein ligase A (338 aa).

The region spanning 29–216 is the BPL/LPL catalytic domain; it reads PATQRVLFLW…AFFAHYGERV (188 aa). ATP-binding positions include R71, 76–79, and K134; that span reads GAVF. (R)-lipoate is bound at residue K134.

The protein belongs to the LplA family. In terms of assembly, monomer.

The protein resides in the cytoplasm. It catalyses the reaction L-lysyl-[lipoyl-carrier protein] + (R)-lipoate + ATP = N(6)-[(R)-lipoyl]-L-lysyl-[lipoyl-carrier protein] + AMP + diphosphate + H(+). It functions in the pathway protein modification; protein lipoylation via exogenous pathway; protein N(6)-(lipoyl)lysine from lipoate: step 1/2. The protein operates within protein modification; protein lipoylation via exogenous pathway; protein N(6)-(lipoyl)lysine from lipoate: step 2/2. In terms of biological role, catalyzes both the ATP-dependent activation of exogenously supplied lipoate to lipoyl-AMP and the transfer of the activated lipoyl onto the lipoyl domains of lipoate-dependent enzymes. This is Lipoate-protein ligase A from Salmonella paratyphi C (strain RKS4594).